Here is a 664-residue protein sequence, read N- to C-terminus: Protein LYK5 (664 aa).

The N-terminal stretch at 1–26 (MAACTLHALSVTLFLLLFFAVSPAKA) is a signal peptide. At 27–277 (QQPYVNNHQL…DPPGSSSSHK (251 aa)) the chain is on the extracellular side. 5 N-linked (GlcNAc...) asparagine glycosylation sites follow: asparagine 45, asparagine 81, asparagine 111, asparagine 125, and asparagine 129. 3 disulfide bridges follow: cysteine 52–cysteine 114, cysteine 58–cysteine 181, and cysteine 112–cysteine 179. Residue 135 to 141 (GDETYFS) coordinates chitin. Asparagine 144 is a glycosylation site (N-linked (GlcNAc...) asparagine). 164–170 (ERQLTPG) contacts chitin. The LysM domain occupies 195–238 (LTYLVAMGDSISGIAEMFNSTSAAITEGNELTSDNIFFFTPVLV). Asparagine 213 is a glycosylation site (N-linked (GlcNAc...) asparagine). A compositionally biased stretch (pro residues) spans 251–269 (PSPPPPPVVATPPQTPVDP). The tract at residues 251–270 (PSPPPPPVVATPPQTPVDPP) is disordered. Residues 278–298 (WIYIGIGIGAGLLLLLSILAL) form a helical membrane-spanning segment. Over 299–664 (CFYKRRSKKK…DLLRSGSLGN (366 aa)) the chain is Cytoplasmic. The 293-residue stretch at 351–643 (KSAIESLTLY…TQVLTTLSMI (293 aa)) folds into the Protein kinase domain. Residues 357-365 (LTLYRFNDL) and lysine 395 contribute to the ATP site.

It belongs to the protein kinase superfamily. Ser/Thr protein kinase family.

Its subcellular location is the cell membrane. Functionally, may recognize microbe-derived N-acetylglucosamine (NAG)-containing ligands. The chain is Protein LYK5 (LYK5) from Arabidopsis thaliana (Mouse-ear cress).